The chain runs to 176 residues: MQCPFCQHTDSRVLESRSAEAGQSVRRRRECLQCNRRFTTYERIEFVPITVIKRNQDRELFDRSKLLKGVATACEKTGLTALQLESLVDDVEAELQQQAVREVTSTELGESVLTKLQSLSEVAYVRFASVYRQFRGIRDFVEALDQLKESGDGPLPSVLDEPYEDTAQPTIMISPQ.

The segment at 3–34 (CPFCQHTDSRVLESRSAEAGQSVRRRRECLQC) is a zinc-finger region. The ATP-cone domain maps to 49–139 (ITVIKRNQDR…VYRQFRGIRD (91 aa)). The disordered stretch occupies residues 151–176 (GDGPLPSVLDEPYEDTAQPTIMISPQ). Residues 167–176 (AQPTIMISPQ) are compositionally biased toward polar residues.

It belongs to the NrdR family. Zn(2+) serves as cofactor.

Functionally, negatively regulates transcription of bacterial ribonucleotide reductase nrd genes and operons by binding to NrdR-boxes. This chain is Transcriptional repressor NrdR, found in Acaryochloris marina (strain MBIC 11017).